The sequence spans 322 residues: Protein-L-isoaspartate O-methyltransferase (322 aa).

A disordered region spans residues 1-101; the sequence is MSGERAKRFP…AKQGDRSAAP (101 aa). The segment covering 14-29 has biased composition (basic and acidic residues); that stretch reads EDLKREPRKPEGRVAE. Low complexity-rich tracts occupy residues 33-51 and 76-91; these read AGDAARQRLTAAAAAPAAA and HAPAAPGAAKRAPQGG. Ser170 is a catalytic residue.

The protein belongs to the methyltransferase superfamily. L-isoaspartyl/D-aspartyl protein methyltransferase family.

The protein resides in the cytoplasm. The catalysed reaction is [protein]-L-isoaspartate + S-adenosyl-L-methionine = [protein]-L-isoaspartate alpha-methyl ester + S-adenosyl-L-homocysteine. Catalyzes the methyl esterification of L-isoaspartyl residues in peptides and proteins that result from spontaneous decomposition of normal L-aspartyl and L-asparaginyl residues. It plays a role in the repair and/or degradation of damaged proteins. The sequence is that of Protein-L-isoaspartate O-methyltransferase from Burkholderia pseudomallei (strain 1710b).